The sequence spans 389 residues: Flagellar P-ring protein (389 aa).

Residues 1-33 (MRPLVAARRRAAACCALAACMLALAFAPAAARA) form the signal peptide.

The protein belongs to the FlgI family. The basal body constitutes a major portion of the flagellar organelle and consists of four rings (L,P,S, and M) mounted on a central rod.

It is found in the periplasm. The protein localises to the bacterial flagellum basal body. In terms of biological role, assembles around the rod to form the L-ring and probably protects the motor/basal body from shearing forces during rotation. The polypeptide is Flagellar P-ring protein (Burkholderia mallei (strain ATCC 23344)).